Here is a 278-residue protein sequence, read N- to C-terminus: Imidazole glycerol phosphate synthase subunit HisF (278 aa).

Active-site residues include D11 and D130.

This sequence belongs to the HisA/HisF family. Heterodimer of HisH and HisF.

Its subcellular location is the cytoplasm. The enzyme catalyses 5-[(5-phospho-1-deoxy-D-ribulos-1-ylimino)methylamino]-1-(5-phospho-beta-D-ribosyl)imidazole-4-carboxamide + L-glutamine = D-erythro-1-(imidazol-4-yl)glycerol 3-phosphate + 5-amino-1-(5-phospho-beta-D-ribosyl)imidazole-4-carboxamide + L-glutamate + H(+). It functions in the pathway amino-acid biosynthesis; L-histidine biosynthesis; L-histidine from 5-phospho-alpha-D-ribose 1-diphosphate: step 5/9. In terms of biological role, IGPS catalyzes the conversion of PRFAR and glutamine to IGP, AICAR and glutamate. The HisF subunit catalyzes the cyclization activity that produces IGP and AICAR from PRFAR using the ammonia provided by the HisH subunit. The sequence is that of Imidazole glycerol phosphate synthase subunit HisF from Thermodesulfovibrio yellowstonii (strain ATCC 51303 / DSM 11347 / YP87).